Consider the following 289-residue polypeptide: MTILLTGGSGKTAGHIANLLKEAKLPFIVGSRSSNPHTVERHRTFDWLDEATFNNVLSVDEGMEPVSVVWLVSPPILDLAPPVIRFIDFASSRGVKRFVLLSASTVEKGGPAMGLIHAHLDTIEGVSYTVLRPSWFMENFSTRGEFPCDTIREEDTIYSAAKDGKIPFISVADIARVALRALTAPALHNKDHVLLGPELLTYDDVAEILTRVVGRNIHHVRLTESELAAKLQERGMPADEAAMHASLDSIVEAGAEEKLNTEVKDLTGEEPRHFADFVSDNKNVWLMRD.

Belongs to the fgaFS/easG family. As to quaternary structure, monomer.

The enzyme catalyses agroclavine + NADP(+) = didehydroagroclavine + NADPH + H(+). It participates in alkaloid biosynthesis; ergot alkaloid biosynthesis. Its function is as follows. Agroclavine dehydrogenase; part of the gene cluster that mediates the biosynthesis of fungal ergot alkaloid ergovaline, the predominant ergopeptine product in E.festucae var. lolii. DmaW catalyzes the first step of ergot alkaloid biosynthesis by condensing dimethylallyl diphosphate (DMAP) and tryptophan to form 4-dimethylallyl-L-tryptophan. The second step is catalyzed by the methyltransferase easF that methylates 4-dimethylallyl-L-tryptophan in the presence of S-adenosyl-L-methionine, resulting in the formation of 4-dimethylallyl-L-abrine. The catalase easC and the FAD-dependent oxidoreductase easE then transform 4-dimethylallyl-L-abrine to chanoclavine-I which is further oxidized by easD in the presence of NAD(+), resulting in the formation of chanoclavine-I aldehyde. Agroclavine dehydrogenase easG then mediates the conversion of chanoclavine-I aldehyde to agroclavine via a non-enzymatic adduct reaction: the substrate is an iminium intermediate that is formed spontaneously from chanoclavine-I aldehyde in the presence of glutathione. Further conversion of agroclavine to paspalic acid is a two-step process involving oxidation of agroclavine to elymoclavine and of elymoclavine to paspalic acid, the second step being performed by the elymoclavine oxidase cloA. However, cloA does not encode a functional enzyme indicating that C.fusiformis terminates its ergot alkaloid pathway at elymoclavine. The sequence is that of Agroclavine dehydrogenase from Claviceps fusiformis (Ergot fungus).